The primary structure comprises 265 residues: Selenoprotein Pb (265 aa).

A signal peptide spans Met-1–Ala-18. Asn-28 is a glycosylation site (N-linked (GlcNAc...) asparagine). Residue Sec-64 is a non-standard amino acid, selenocysteine. Residues Asn-88, Asn-178, Asn-184, and Asn-207 are each glycosylated (N-linked (GlcNAc...) asparagine). The segment at Ser-188–Arg-265 is disordered. Residues Glu-201–Pro-211 are compositionally biased toward polar residues. Positions Ala-215 to Asn-231 are enriched in basic residues. A compositionally biased stretch (basic and acidic residues) spans Lys-239–Arg-265.

The protein localises to the secreted. Functionally, might be responsible for some of the extracellular antioxidant defense properties of selenium. This chain is Selenoprotein Pb (sepp1b), found in Danio rerio (Zebrafish).